The primary structure comprises 321 residues: Probable endolytic peptidoglycan transglycosylase RlpA (321 aa).

Belongs to the RlpA family.

Lytic transglycosylase with a strong preference for naked glycan strands that lack stem peptides. This Synechocystis sp. (strain ATCC 27184 / PCC 6803 / Kazusa) protein is Probable endolytic peptidoglycan transglycosylase RlpA.